We begin with the raw amino-acid sequence, 177 residues long: Probable phospholipid hydroperoxide glutathione peroxidase (177 aa).

Cys-42 is a catalytic residue.

This sequence belongs to the glutathione peroxidase family.

It localises to the cytoplasm. It carries out the reaction a hydroperoxy polyunsaturated fatty acid + 2 glutathione = a hydroxy polyunsaturated fatty acid + glutathione disulfide + H2O. Its function is as follows. Protects cells and enzymes from oxidative damage, by catalyzing the reduction of hydrogen peroxide, lipid peroxides and organic hydroperoxide, by glutathione. The protein is Probable phospholipid hydroperoxide glutathione peroxidase of Encephalitozoon cuniculi (strain GB-M1) (Microsporidian parasite).